Here is a 574-residue protein sequence, read N- to C-terminus: MAYRIDRQAYAETYGPTTGDRIRLADTELILEVERDFTTYGEEVKFGGGKVIRDGMGQSQQSRANGAVDTVITNALILDWWGIVKADIGLRDGRIVAIGKAGNPDITDGIDIVIGPGTEAIAGEGHIVTAGAIDSHIHFICPQQIETALASGVTTMLGGGTGPATGTNATTCTPGAFHISRMLQAAEGLPMNLGFFGKGNASTAEALEEQVLAGACGLKLHEDWGTTPAAIDCCLSVADRFDVQVCIHTDTLNEAGFVEDTIRAIGGRTIHTFHTEGAGGGHAPDIIRICGESNVLPSSTNPTRPYTRNTLEEHLDMLMVCHHLDPAIPEDVAFAESRIRRETIAAEDILHDLGAFSIIASDSQAMGRVGEVITRTFQTAHKMKVQRGPLPEDAANPRGSRNDNNRIKRYIAKVTINPAIAHGIDNHVGSVEVGKLADLVLWKPGFFGVRPELVIKGGSIIWAQMGDANASIPTPGPVHGRPMFAAFGKALAPSCLTFLSQAAIETDLPNKLGLQRACIPVLNTRTIGKAEMHNNNSLPKVEVDPQTYEVFADGDLLTCDPAEELPMAQRYLLL.

Residues 131 to 574 (GAIDSHIHFI…LPMAQRYLLL (444 aa)) enclose the Urease domain. His-136, His-138, and Lys-219 together coordinate Ni(2+). N6-carboxylysine is present on Lys-219. His-221 is a substrate binding site. 2 residues coordinate Ni(2+): His-248 and His-274. The Proton donor role is filled by His-322. Asp-362 lines the Ni(2+) pocket. The tract at residues 384–403 (KVQRGPLPEDAANPRGSRND) is disordered.

This sequence belongs to the metallo-dependent hydrolases superfamily. Urease alpha subunit family. In terms of assembly, heterotrimer of UreA (gamma), UreB (beta) and UreC (alpha) subunits. Three heterotrimers associate to form the active enzyme. Ni cation is required as a cofactor. Post-translationally, carboxylation allows a single lysine to coordinate two nickel ions.

The protein resides in the cytoplasm. The catalysed reaction is urea + 2 H2O + H(+) = hydrogencarbonate + 2 NH4(+). It participates in nitrogen metabolism; urea degradation; CO(2) and NH(3) from urea (urease route): step 1/1. This Prochlorococcus marinus (strain MIT 9313) protein is Urease subunit alpha.